We begin with the raw amino-acid sequence, 618 residues long: Glutathione-regulated potassium-efflux system protein (618 aa).

12 consecutive transmembrane segments (helical) span residues 6–26 (NPEL…VPLF), 32–52 (GSVL…FGIV), 55–75 (PTAV…IIGL), 94–114 (LLQV…LLGL), 118–138 (VSFI…MQSL), 152–172 (VIST…SVAF), 186–206 (WVSI…GKWL), 227–247 (ALLV…SMAM), 274–294 (GLLL…HLVF), 298–318 (ILLL…VYII), 336–356 (MAHG…AEVI), and 362–382 (ATFT…AQIA). Positions 409-525 (EDNVLVIGFG…LIKQDVDFIV (117 aa)) constitute an RCK N-terminal domain.

The protein belongs to the monovalent cation:proton antiporter 2 (CPA2) transporter (TC 2.A.37) family.

It localises to the cell inner membrane. Functionally, transport system that facilitate potassium-efflux, possibly by potassium-proton antiport. The sequence is that of Glutathione-regulated potassium-efflux system protein (kefBC) from Haemophilus influenzae (strain ATCC 51907 / DSM 11121 / KW20 / Rd).